The sequence spans 364 residues: GDSL esterase/lipase 7 (364 aa).

The first 19 residues, 1–19, serve as a signal peptide directing secretion; sequence MKSLLICLVLLELVWLGNG. The active-site Nucleophile is the serine 37. N-linked (GlcNAc...) asparagine glycans are attached at residues asparagine 236, asparagine 237, and asparagine 264. Active-site residues include aspartate 329 and histidine 332. N-linked (GlcNAc...) asparagine glycosylation is present at asparagine 351.

The protein belongs to the 'GDSL' lipolytic enzyme family.

The protein resides in the secreted. This is GDSL esterase/lipase 7 (GLIP7) from Arabidopsis thaliana (Mouse-ear cress).